A 204-amino-acid polypeptide reads, in one-letter code: ADP-ribosylation factor-like protein 15 (204 aa).

GTP is bound by residues 39–46 (GLTGSGKT), 82–86 (ELGGA), and 142–145 (NHQD).

It belongs to the small GTPase superfamily. Arf family.

This Pongo abelii (Sumatran orangutan) protein is ADP-ribosylation factor-like protein 15 (ARL15).